Consider the following 414-residue polypeptide: Secernin-1 (414 aa).

Belongs to the peptidase C69 family. Secernin subfamily.

The protein resides in the cytoplasm. Its function is as follows. Regulates exocytosis in mast cells. Increases both the extent of secretion and the sensitivity of mast cells to stimulation with calcium. This Mus musculus (Mouse) protein is Secernin-1 (Scrn1).